We begin with the raw amino-acid sequence, 524 residues long: Chromosomal replication initiator protein DnaA (524 aa).

A domain I, interacts with DnaA modulators region spans residues 1-105 (MSQNSSSLLE…EQEIPETPAQ (105 aa)). Residues 95-183 (PEQEIPETPA…PAHNPNREVS (89 aa)) are disordered. Residues 106–182 (QEFKYQPDAP…TPAHNPNREV (77 aa)) are domain II. Over residues 148 to 158 (APEPHPAPIAD) the composition is skewed to pro residues. Residues 183–399 (SLNPKYTFES…GALIRVSAYS (217 aa)) form a domain III, AAA+ region region. ATP-binding residues include glycine 227, glycine 229, lysine 230, and threonine 231. Positions 400-524 (SLINQPIDKE…TQLIKSRGRN (125 aa)) are domain IV, binds dsDNA.

The protein belongs to the DnaA family. Oligomerizes as a right-handed, spiral filament on DNA at oriC.

It is found in the cytoplasm. Its function is as follows. Plays an essential role in the initiation and regulation of chromosomal replication. ATP-DnaA binds to the origin of replication (oriC) to initiate formation of the DNA replication initiation complex once per cell cycle. Binds the DnaA box (a 9 base pair repeat at the origin) and separates the double-stranded (ds)DNA. Forms a right-handed helical filament on oriC DNA; dsDNA binds to the exterior of the filament while single-stranded (ss)DNA is stabiized in the filament's interior. The ATP-DnaA-oriC complex binds and stabilizes one strand of the AT-rich DNA unwinding element (DUE), permitting loading of DNA polymerase. After initiation quickly degrades to an ADP-DnaA complex that is not apt for DNA replication. Binds acidic phospholipids. This is Chromosomal replication initiator protein DnaA from Corynebacterium glutamicum (strain R).